A 253-amino-acid chain; its full sequence is Sulfate transporter CysZ (253 aa).

A run of 4 helical transmembrane segments spans residues 31-51, 72-92, 151-171, and 222-242; these read FVIL…WWLF, LSYL…GYFF, IVLL…PVLW, and IPVL…AMWV.

The protein belongs to the CysZ family.

Its subcellular location is the cell inner membrane. In terms of biological role, high affinity, high specificity proton-dependent sulfate transporter, which mediates sulfate uptake. Provides the sulfur source for the cysteine synthesis pathway. The chain is Sulfate transporter CysZ from Salmonella paratyphi A (strain AKU_12601).